Reading from the N-terminus, the 88-residue chain is Putative membrane protein insertion efficiency factor (88 aa).

Positions Val68 to His88 are disordered. The span at Pro69–Cys82 shows a compositional bias: basic and acidic residues.

This sequence belongs to the UPF0161 family.

The protein localises to the cell membrane. In terms of biological role, could be involved in insertion of integral membrane proteins into the membrane. This Listeria monocytogenes serovar 1/2a (strain ATCC BAA-679 / EGD-e) protein is Putative membrane protein insertion efficiency factor.